A 464-amino-acid chain; its full sequence is ATP-dependent protease ATPase subunit HslU (464 aa).

Residues Val18, Gly60–Glu65, Asp277, Glu342, and Arg414 each bind ATP.

This sequence belongs to the ClpX chaperone family. HslU subfamily. A double ring-shaped homohexamer of HslV is capped on each side by a ring-shaped HslU homohexamer. The assembly of the HslU/HslV complex is dependent on binding of ATP.

It localises to the cytoplasm. ATPase subunit of a proteasome-like degradation complex; this subunit has chaperone activity. The binding of ATP and its subsequent hydrolysis by HslU are essential for unfolding of protein substrates subsequently hydrolyzed by HslV. HslU recognizes the N-terminal part of its protein substrates and unfolds these before they are guided to HslV for hydrolysis. This is ATP-dependent protease ATPase subunit HslU from Lactobacillus leichmannii.